The following is a 247-amino-acid chain: MAGHSKWANTRHRKAAQDAKRGKIFTKIIRELVTAAKLGGGDPDANPRLRAAVDKALSNNMTRDTLNRAIARGVGGDDDANMETIIYEGYGPGGTAIMVECLSDNRNRTVAEVRHAFSKCGGNLGTDGSVAYLFSKKGVISFEKGDEDTIMEAALEAGAEDVVTYDDGAIDVYTAWEEMGKVRDALENAGLKADSAEVSMIPSTKADMDAETAPKLLRLIDMLEDCDDVQEVYHNGEISDEVAATLE.

The disordered stretch occupies residues 1–20; it reads MAGHSKWANTRHRKAAQDAK.

The protein belongs to the TACO1 family.

Its subcellular location is the cytoplasm. The protein is Probable transcriptional regulatory protein YebC of Salmonella arizonae (strain ATCC BAA-731 / CDC346-86 / RSK2980).